The primary structure comprises 439 residues: Methylenetetrahydrofolate--tRNA-(uracil-5-)-methyltransferase TrmFO (439 aa).

Position 9-14 (9-14 (GAGLAG)) interacts with FAD.

This sequence belongs to the MnmG family. TrmFO subfamily. The cofactor is FAD.

The protein localises to the cytoplasm. The catalysed reaction is uridine(54) in tRNA + (6R)-5,10-methylene-5,6,7,8-tetrahydrofolate + NADH + H(+) = 5-methyluridine(54) in tRNA + (6S)-5,6,7,8-tetrahydrofolate + NAD(+). It catalyses the reaction uridine(54) in tRNA + (6R)-5,10-methylene-5,6,7,8-tetrahydrofolate + NADPH + H(+) = 5-methyluridine(54) in tRNA + (6S)-5,6,7,8-tetrahydrofolate + NADP(+). In terms of biological role, catalyzes the folate-dependent formation of 5-methyl-uridine at position 54 (M-5-U54) in all tRNAs. This is Methylenetetrahydrofolate--tRNA-(uracil-5-)-methyltransferase TrmFO from Lactobacillus delbrueckii subsp. bulgaricus (strain ATCC BAA-365 / Lb-18).